Reading from the N-terminus, the 317-residue chain is 4-hydroxy-3-methylbut-2-enyl diphosphate reductase (317 aa).

Cys-12 lines the [4Fe-4S] cluster pocket. (2E)-4-hydroxy-3-methylbut-2-enyl diphosphate contacts are provided by His-41 and His-74. The dimethylallyl diphosphate site is built by His-41 and His-74. 2 residues coordinate isopentenyl diphosphate: His-41 and His-74. Cys-96 is a binding site for [4Fe-4S] cluster. His-124 serves as a coordination point for (2E)-4-hydroxy-3-methylbut-2-enyl diphosphate. His-124 lines the dimethylallyl diphosphate pocket. Isopentenyl diphosphate is bound at residue His-124. The Proton donor role is filled by Glu-126. Residue Thr-169 participates in (2E)-4-hydroxy-3-methylbut-2-enyl diphosphate binding. Cys-199 is a [4Fe-4S] cluster binding site. Residues Ser-227, Ser-228, Asn-229, and Ser-271 each contribute to the (2E)-4-hydroxy-3-methylbut-2-enyl diphosphate site. Residues Ser-227, Ser-228, Asn-229, and Ser-271 each coordinate dimethylallyl diphosphate. Isopentenyl diphosphate-binding residues include Ser-227, Ser-228, Asn-229, and Ser-271.

It belongs to the IspH family. The cofactor is [4Fe-4S] cluster.

The catalysed reaction is isopentenyl diphosphate + 2 oxidized [2Fe-2S]-[ferredoxin] + H2O = (2E)-4-hydroxy-3-methylbut-2-enyl diphosphate + 2 reduced [2Fe-2S]-[ferredoxin] + 2 H(+). It carries out the reaction dimethylallyl diphosphate + 2 oxidized [2Fe-2S]-[ferredoxin] + H2O = (2E)-4-hydroxy-3-methylbut-2-enyl diphosphate + 2 reduced [2Fe-2S]-[ferredoxin] + 2 H(+). It functions in the pathway isoprenoid biosynthesis; dimethylallyl diphosphate biosynthesis; dimethylallyl diphosphate from (2E)-4-hydroxy-3-methylbutenyl diphosphate: step 1/1. It participates in isoprenoid biosynthesis; isopentenyl diphosphate biosynthesis via DXP pathway; isopentenyl diphosphate from 1-deoxy-D-xylulose 5-phosphate: step 6/6. Its function is as follows. Catalyzes the conversion of 1-hydroxy-2-methyl-2-(E)-butenyl 4-diphosphate (HMBPP) into a mixture of isopentenyl diphosphate (IPP) and dimethylallyl diphosphate (DMAPP). Acts in the terminal step of the DOXP/MEP pathway for isoprenoid precursor biosynthesis. The sequence is that of 4-hydroxy-3-methylbut-2-enyl diphosphate reductase from Vibrio parahaemolyticus serotype O3:K6 (strain RIMD 2210633).